A 648-amino-acid chain; its full sequence is Proton myo-inositol cotransporter (648 aa).

Residues 1–76 (MSRKASENVE…AARRQFQQDE (76 aa)) lie on the Cytoplasmic side of the membrane. Ser-6, Ser-47, and Ser-50 each carry phosphoserine. A helical transmembrane segment spans residues 77–97 (TPAFVYVVAVFSALGGFLFGY). Residues 98 to 125 (DTGVVSGAMLLLKRQLSLDALWQELLVS) lie on the Extracellular side of the membrane. The helical transmembrane segment at 126–146 (STVGAAAVSALAGGALNGVFG) threads the bilayer. The Cytoplasmic portion of the chain corresponds to 147–148 (RR). Residues 149 to 169 (AAILLASALFTAGSAVLAAAN) form a helical membrane-spanning segment. Residues 170-178 (NKETLLAGR) lie on the Extracellular side of the membrane. The chain crosses the membrane as a helical span at residues 179 to 199 (LVVGLGIGIASMTVPVYIAEV). Topologically, residues 200-212 (SPPNLRGRLVTIN) are cytoplasmic. The helical transmembrane segment at 213-233 (TLFITGGQFFASVVDGAFSYL) threads the bilayer. Residues 234-239 (QKDGWR) are Extracellular-facing. A helical membrane pass occupies residues 240–260 (YMLGLAAVPAVIQFFGFLFLP). Residues 261 to 324 (ESPRWLIQKG…RMLSYPPTRR (64 aa)) are Cytoplasmic-facing. A helical membrane pass occupies residues 325–345 (ALIVGCGLQMFQQLSGINTIM). At 346-363 (YYSATILQMSGVEDDRLA) the chain is on the extracellular side. A helical transmembrane segment spans residues 364–384 (IWLASVTAFTNFIFTLVGVWL). The Cytoplasmic segment spans residues 385–393 (VEKVGRRKL). The chain crosses the membrane as a helical span at residues 394-414 (TFGSLAGTTVALIILALGFVL). Over 415-508 (SAQVSPRITF…NFCPTPYSWT (94 aa)) the chain is Extracellular. Asn-433, Asn-458, and Asn-485 each carry an N-linked (GlcNAc...) asparagine glycan. A helical transmembrane segment spans residues 509–529 (ALLGLILYLVFFAPGMGPMPW). Residues 530 to 549 (TVNSEIYPLWARSTGNACSS) are Cytoplasmic-facing. A helical transmembrane segment spans residues 550–570 (GINWIFNVLVSLTFLHTAEYL). The Extracellular segment spans residues 571 to 573 (TYY). The helical transmembrane segment at 574–594 (GAFFLYAGFAAVGLLFIYGCL) threads the bilayer. Topologically, residues 595-648 (PETKGKKLEEIESLFDNRLCTCGTSDSDEGRYIEYIRVKGSNYHLSDNDASDVE) are cytoplasmic. A phosphoserine mark is found at Ser-640 and Ser-645.

Belongs to the major facilitator superfamily. Sugar transporter (TC 2.A.1.1) family. Glycosylated. In terms of tissue distribution, predominantly expressed in the brain.

It is found in the cell membrane. The enzyme catalyses myo-inositol(out) + H(+)(out) = myo-inositol(in) + H(+)(in). In terms of biological role, h(+)-myo-inositol cotransporter. Can also transport related stereoisomers. The chain is Proton myo-inositol cotransporter from Homo sapiens (Human).